Here is a 133-residue protein sequence, read N- to C-terminus: Hexon-interlacing protein (133 aa).

The stretch at 97–127 (REEDALSVVLTRMEELSQQLQDLFAKVALLN) forms a coiled coil.

It belongs to the adenoviridae hexon-interlacing protein family. As to quaternary structure, homotrimer. Interacts with hexon protein; this interaction tethers the hexons together. Self-interacts with adjacent proteins. Interacts with kinesin light chain KLC1; this interaction leads to capsid disruption at the nuclear pore complex during virus entry into host cell.

The protein resides in the virion. It is found in the host nucleus. Structural component of the virion that acts as a cement protein on the capsid exterior and forms triskelion structures consisting of three molecules that stabilize three hexon trimers at the center of each icosahedral facet and fixes the peripentonal hexons. Dispensable for assembly. During virus entry, recruits the anterograde motor kinesin-1 to the capsid docked at the nuclear pore complex thereby subjecting the docked capsid to a pulling force. The resulting tension leads to capsid disruption, dispersion of capsid fragments toward cell periphery and eventually viral DNA entry into the host nucleus. This Homo sapiens (Human) protein is Hexon-interlacing protein.